The sequence spans 274 residues: Dermonecrotic toxin SdSicTox-betaIIB1bxiii (274 aa).

The active site involves His5. 2 residues coordinate Mg(2+): Glu25 and Asp27. The active-site Nucleophile is the His41. Disulfide bonds link Cys45–Cys51 and Cys47–Cys190. Asp85 contributes to the Mg(2+) binding site.

It belongs to the arthropod phospholipase D family. Class II subfamily. Requires Mg(2+) as cofactor. In terms of tissue distribution, expressed by the venom gland.

It localises to the secreted. It carries out the reaction an N-(acyl)-sphingosylphosphocholine = an N-(acyl)-sphingosyl-1,3-cyclic phosphate + choline. The enzyme catalyses an N-(acyl)-sphingosylphosphoethanolamine = an N-(acyl)-sphingosyl-1,3-cyclic phosphate + ethanolamine. It catalyses the reaction a 1-acyl-sn-glycero-3-phosphocholine = a 1-acyl-sn-glycero-2,3-cyclic phosphate + choline. The catalysed reaction is a 1-acyl-sn-glycero-3-phosphoethanolamine = a 1-acyl-sn-glycero-2,3-cyclic phosphate + ethanolamine. Functionally, dermonecrotic toxins cleave the phosphodiester linkage between the phosphate and headgroup of certain phospholipids (sphingolipid and lysolipid substrates), forming an alcohol (often choline) and a cyclic phosphate. This toxin acts on sphingomyelin (SM). It may also act on ceramide phosphoethanolamine (CPE), lysophosphatidylcholine (LPC) and lysophosphatidylethanolamine (LPE), but not on lysophosphatidylserine (LPS), and lysophosphatidylglycerol (LPG). It acts by transphosphatidylation, releasing exclusively cyclic phosphate products as second products. Induces dermonecrosis, hemolysis, increased vascular permeability, edema, inflammatory response, and platelet aggregation. The chain is Dermonecrotic toxin SdSicTox-betaIIB1bxiii from Sicarius cf. damarensis (strain GJB-2008) (Six-eyed sand spider).